The primary structure comprises 1229 residues: Membrane-anchored lipid-binding protein SIP3 (1229 aa).

At 1 to 1066 (MSVHGRDPKK…AEKFSRINRM (1066 aa)) the chain is on the cytoplasmic side. In terms of domain architecture, PH spans 309–423 (SPEKSGWLYM…WLIAFEATKK (115 aa)). The VASt domain maps to 771 to 976 (EYSITYNHEY…VLRYYLEKIG (206 aa)). Residues 1067-1087 (MVVGLLASIMINILLSEKASV) form a helical membrane-spanning segment. Topologically, residues 1088-1229 (PYWSIKRAEK…ELEKLRPPIT (142 aa)) are lumenal. An N-linked (GlcNAc...) asparagine glycan is attached at Asn-1206.

The protein belongs to the SIP3 family. In terms of assembly, interacts with SNF1.

The protein localises to the endoplasmic reticulum membrane. In terms of biological role, may be involved in sterol transfer between intracellular membranes. The polypeptide is Membrane-anchored lipid-binding protein SIP3 (Saccharomyces cerevisiae (strain ATCC 204508 / S288c) (Baker's yeast)).